Reading from the N-terminus, the 549-residue chain is mRNA-capping enzyme subunit beta (549 aa).

N-acetylserine is present on serine 2. Position 15 is a phosphoserine (serine 15). Residues 30 to 169 are disordered; sequence LQKLSEAANG…QGNEGNIASN (140 aa). A compositionally biased stretch (acidic residues) spans 86–96; sequence DDEETDTDDEM. A Phosphoserine modification is found at serine 124. The span at 135-157 shows a compositional bias: basic and acidic residues; sequence AKLEKPSDDSIHQNSKSDEEQRI. Lysine 223 acts as the N6-GMP-lysine intermediate in catalysis.

It belongs to the fungal TPase family. Heterodimer. The mRNA-capping enzyme is composed of two separate chains alpha and beta, respectively a mRNA guanylyltransferase and an mRNA 5'-triphosphate monophosphatase. Requires Mg(2+) as cofactor.

The protein localises to the nucleus. The enzyme catalyses a 5'-end triphospho-ribonucleoside in mRNA + H2O = a 5'-end diphospho-ribonucleoside in mRNA + phosphate + H(+). In terms of biological role, first step of mRNA capping. Converts the 5'-triphosphate end of a nascent mRNA chain into a diphosphate end. The protein is mRNA-capping enzyme subunit beta (CET1) of Saccharomyces cerevisiae (strain ATCC 204508 / S288c) (Baker's yeast).